The chain runs to 86 residues: Kappa-theraphotoxin-Cg1a 3 (86 aa).

The N-terminal stretch at 1–21 (MKVSVLITLAVLGVMFVWASA) is a signal peptide. The propeptide occupies 22 to 50 (AELEERGSDQRDSPAWLKSMERIFRSEER). 3 cysteine pairs are disulfide-bonded: Cys52/Cys66, Cys59/Cys71, and Cys65/Cys78. Phe84 bears the Phenylalanine amide mark.

It belongs to the neurotoxin 10 (Hwtx-1) family. 28 (Jztx-11) subfamily. Expressed by the venom gland.

It localises to the secreted. In terms of biological role, this toxin acts as a voltage-dependent gating-modifier. It inhibits the sodium conductance (IC(50)=124 nM) and slows the fast inactivation (EC(50)=1180 nM) of Nav1.5/SCN5A. It significantly shifts the activation to more depolarized voltages and decreases the deactivation of Nav1.5 currents upon extreme depolarization, but only slightly affects voltage-dependence of steady-state inactivation. In addition, this toxin causes an approximately five-fold decrease in the rate of recovery from inactivation and an approximately 1.9-fold reduction in the closed-state inactivation rate. This toxin integrates the functions of site 3 toxins (alpha-scorpion toxins) with site 4 toxins (beta-scorpion and spider toxins) by targeting multiple sites on Nav1.5. Also shows inhibition of voltage-gated potassium channels (5 uM completely inhibits Kv2.1/KCNB1, whereas 5 uM moderately inhibits Kv4.2/KCND2 Kv4.1/KCND1 channels). The sequence is that of Kappa-theraphotoxin-Cg1a 3 from Chilobrachys guangxiensis (Chinese earth tiger tarantula).